Consider the following 236-residue polypeptide: 2-C-methyl-D-erythritol 4-phosphate cytidylyltransferase (236 aa).

The protein belongs to the IspD/TarI cytidylyltransferase family. IspD subfamily. As to quaternary structure, homodimer.

It carries out the reaction 2-C-methyl-D-erythritol 4-phosphate + CTP + H(+) = 4-CDP-2-C-methyl-D-erythritol + diphosphate. It functions in the pathway isoprenoid biosynthesis; isopentenyl diphosphate biosynthesis via DXP pathway; isopentenyl diphosphate from 1-deoxy-D-xylulose 5-phosphate: step 2/6. Functionally, catalyzes the formation of 4-diphosphocytidyl-2-C-methyl-D-erythritol from CTP and 2-C-methyl-D-erythritol 4-phosphate (MEP). The sequence is that of 2-C-methyl-D-erythritol 4-phosphate cytidylyltransferase from Salmonella newport (strain SL254).